The following is a 295-amino-acid chain: Putative 23S rRNA (guanine-N(1)-)-methyltransferase (295 aa).

4 residues coordinate Zn(2+): C11, C14, C31, and H35. Residues Y74, 116 to 117, and H204 contribute to the S-adenosyl-L-methionine site; that span reads TG.

Belongs to the methyltransferase superfamily. RlmA family.

Confers strong resistance to mycinamicin (MM) and tylosin (TY). May function as methyltransferase. The sequence is that of Putative 23S rRNA (guanine-N(1)-)-methyltransferase (myrA) from Micromonospora griseorubida.